The sequence spans 302 residues: Sulfate adenylyltransferase subunit 2 (302 aa).

This sequence belongs to the PAPS reductase family. CysD subfamily. As to quaternary structure, heterodimer composed of CysD, the smaller subunit, and CysN.

It carries out the reaction sulfate + ATP + H(+) = adenosine 5'-phosphosulfate + diphosphate. The protein operates within sulfur metabolism; hydrogen sulfide biosynthesis; sulfite from sulfate: step 1/3. In terms of biological role, with CysN forms the ATP sulfurylase (ATPS) that catalyzes the adenylation of sulfate producing adenosine 5'-phosphosulfate (APS) and diphosphate, the first enzymatic step in sulfur assimilation pathway. APS synthesis involves the formation of a high-energy phosphoric-sulfuric acid anhydride bond driven by GTP hydrolysis by CysN coupled to ATP hydrolysis by CysD. This is Sulfate adenylyltransferase subunit 2 from Erwinia tasmaniensis (strain DSM 17950 / CFBP 7177 / CIP 109463 / NCPPB 4357 / Et1/99).